A 203-amino-acid polypeptide reads, in one-letter code: Lectin (203 aa).

The first 20 residues, 1–20 (MINILHVIAGLALASVGVDA), serve as a signal peptide directing secretion. A propeptide spanning residues 21-53 (RQVGVGADVLHAVENTIDSITGVEASHSALEVG) is cleaved from the precursor.

As to quaternary structure, monomer.

In terms of biological role, N-acetyl-D-glucosamine-specific lectin. Specifically agglutinates rabbit erythrocytes. The chain is Lectin (UPL1) from Ulva pertusa (Sea lettuce).